A 298-amino-acid polypeptide reads, in one-letter code: ATP phosphoribosyltransferase (298 aa).

This sequence belongs to the ATP phosphoribosyltransferase family.

The protein localises to the cytoplasm. It carries out the reaction 1-(5-phospho-beta-D-ribosyl)-ATP + diphosphate = 5-phospho-alpha-D-ribose 1-diphosphate + ATP. It functions in the pathway amino-acid biosynthesis; L-histidine biosynthesis; L-histidine from 5-phospho-alpha-D-ribose 1-diphosphate: step 1/9. Catalyzes the condensation of ATP and 5-phosphoribose 1-diphosphate to form N'-(5'-phosphoribosyl)-ATP (PR-ATP). Has a crucial role in the pathway because the rate of histidine biosynthesis seems to be controlled primarily by regulation of the enzymatic activity. This chain is ATP phosphoribosyltransferase (HIS1), found in Candida albicans (strain SC5314 / ATCC MYA-2876) (Yeast).